We begin with the raw amino-acid sequence, 1351 residues long: Bromodomain-containing protein 4A (1351 aa).

Disordered stretches follow at residues 1-23, 35-58, 168-244, 285-368, 478-638, 700-799, and 821-1334; these read MSSE…GIEG, PQPQ…QPKR, ETEL…RPPA, AAQP…DTKT, EPEE…PMSY, CLRK…LDSS, and PDLP…PSID. The Bromo 1 domain maps to 58-164; it reads RQTNQLQYLL…KLFLQKISEM (107 aa). Over residues 208 to 219 the composition is skewed to low complexity; sequence VKPPVTPVSKPS. The span at 220 to 235 shows a compositional bias: pro residues; the sequence is TPTPPTVTRAPTPPQT. Basic and acidic residues predominate over residues 327 to 343; sequence PRKENGRQIRPTKKTEV. The segment covering 349–359 has biased composition (pro residues); that stretch reads PAPPVLHPQPA. The Bromo 2 domain maps to 366–475; it reads TKTSEQLRYC…DVFEMRFAKM (110 aa). The span at 482 to 504 shows a compositional bias: pro residues; that stretch reads APAPVPSLAPGPPAPSIKGPPPT. An NPS region region spans residues 504–522; that stretch reads TSSDSSSDSTSDSESSSDS. Over residues 505-517 the composition is skewed to low complexity; sequence SSDSSSDSTSDSE. The BID region stretch occupies residues 543–598; it reads QLAALSQPQPNKPKKKEREKRKEKHKRKEEVEEPRKGRIREPPAKKPKKSVQGSGG. The segment covering 554 to 569 has biased composition (basic residues); it reads KPKKKEREKRKEKHKR. Residues 570-586 show a composition bias toward basic and acidic residues; it reads KEEVEEPRKGRIREPPA. Residues 607–621 show a composition bias toward pro residues; sequence PPPAPRPARPAPPSA. Residues 624–708 form the NET domain; sequence ESSEEETQRC…SCLRKKRKSQ (85 aa). The span at 629–638 shows a compositional bias: basic and acidic residues; the sequence is ETQRCRPMSY. Positions 725–738 are enriched in low complexity; that stretch reads SSSESESSSESSTS. Basic residues predominate over residues 751–767; it reads QKKKGHSGRESRKHHHP. The span at 788–799 shows a compositional bias: low complexity; that stretch reads PSYPLPSSLDSS. Over residues 872–890 the composition is skewed to pro residues; that stretch reads PAMPPSASPPPPAPQPPQQ. The span at 892–902 shows a compositional bias: basic residues; the sequence is HVHHHHHHHAQ. Residues 927-953 show a composition bias toward polar residues; that stretch reads LQKSQQPPTQSPIHSLLTSVKVQSQTP. A compositionally biased stretch (pro residues) spans 968–983; that stretch reads VYPPPPSTATTAPPPA. Composition is skewed to low complexity over residues 994-1003 and 1011-1028; these read PVVPQQLPAG and QQQQ…SHQQ. Residues 1051–1350 form a C-terminal (CTD) region region; sequence RQQKQETYPG…LMEIFEQNLF (300 aa). A compositionally biased stretch (pro residues) spans 1075–1089; the sequence is PPVPPYPGLTHPPSP. 2 stretches are compositionally biased toward basic and acidic residues: residues 1150–1161 and 1176–1197; these read PRPDLKKMDGGR and PEKE…DIKI. Polar residues predominate over residues 1214–1224; the sequence is PTSAGKSTSDS. The span at 1226 to 1284 shows a compositional bias: basic and acidic residues; it reads ELFRRQAREKEERERALKLQAEQAERVRREQDRMSRTREDDEVQDQARKAHEEARRRQE. The span at 1301–1310 shows a compositional bias: low complexity; the sequence is SPAQSSQPMM. Basic and acidic residues predominate over residues 1311-1323; the sequence is DQREMARKREQER.

It belongs to the BET family.

Its subcellular location is the nucleus. The protein localises to the chromosome. Its function is as follows. Chromatin reader protein that recognizes and binds acetylated histones and plays a key role in transmission of epigenetic memory across cell divisions and transcription regulation. Remains associated with acetylated chromatin throughout the entire cell cycle and provides epigenetic memory for postmitotic G1 gene transcription by preserving acetylated chromatin status and maintaining high-order chromatin structure. During interphase, plays a key role in regulating the transcription of signal-inducible genes by associating with the P-TEFb complex and recruiting it to promoters. The polypeptide is Bromodomain-containing protein 4A (brd4-a) (Xenopus laevis (African clawed frog)).